A 712-amino-acid polypeptide reads, in one-letter code: Phosphatase and actin regulator 4 (712 aa).

Disordered regions lie at residues 1–22 (MGQA…GQPT) and 90–405 (RGLL…EVPK). Residues 72–97 (EVLERKISMRKPREELVKRGLLLEDS) form an RPEL 1 repeat. Over residues 114 to 124 (NGHTTLIGSTR) the composition is skewed to polar residues. Phosphoserine occurs at positions 125, 127, 140, and 156. The segment covering 136–152 (ERIASLRKPVPEEEPKK) has biased composition (basic and acidic residues). Over residues 198-230 (ATSSGSLARPSSSASTTAITTAPAATMAATNPA) the composition is skewed to low complexity. A compositionally biased stretch (polar residues) spans 233–243 (VHSSGPPSQAP). Over residues 245–267 (TLPAAPASTHTTATLSLTHTGPA) the composition is skewed to low complexity. A phosphoserine mark is found at serine 282, serine 303, and serine 353. Low complexity predominate over residues 345 to 357 (SEPLLTPSSSPLP). Residues 358-371 (AHIPPEPPQSPPFP) are compositionally biased toward pro residues. The residue at position 436 (serine 436) is a Phosphoserine. Residue threonine 441 is modified to Phosphothreonine. Serine 452, serine 462, serine 473, serine 524, serine 526, serine 567, and serine 600 each carry phosphoserine. The segment at 507-557 (VIPKLPQCLQEEEEGKESDSDSEGPIQYRDEEDEDESHHSALANKVKRKDT) is disordered. The span at 516–528 (QEEEEGKESDSDS) shows a compositional bias: acidic residues. 2 RPEL repeats span residues 593–618 (NTLI…QPKN) and 631–656 (RRLT…RFNE). Positions 602-626 (RPTPEELEQRNILQPKNEADRQAEK) are disordered. Serine 638 bears the Phosphoserine mark.

This sequence belongs to the phosphatase and actin regulator family. As to quaternary structure, binds PPP1CA and actin.

It is found in the cytoplasm. The protein resides in the cell projection. It localises to the lamellipodium. In terms of biological role, regulator of protein phosphatase 1 (PP1) required for neural tube and optic fissure closure, and enteric neural crest cell (ENCCs) migration during development. Acts as an activator of PP1 by interacting with PPP1CA and preventing phosphorylation of PPP1CA at 'Thr-320'. During neural tube closure, localizes to the ventral neural tube and activates PP1, leading to down-regulate cell proliferation within cranial neural tissue and the neural retina. Also acts as a regulator of migration of enteric neural crest cells (ENCCs) by activating PP1, leading to dephosphorylation and subsequent activation of cofilin (COF1 or COF2) and repression of the integrin signaling through the RHO/ROCK pathway. The polypeptide is Phosphatase and actin regulator 4 (PHACTR4) (Bos taurus (Bovine)).